We begin with the raw amino-acid sequence, 128 residues long: Cytochrome c-type biogenesis protein CcmE (128 aa).

At 1–8 the chain is on the cytoplasmic side; that stretch reads MQKIVRNR. A helical; Signal-anchor for type II membrane protein membrane pass occupies residues 9–29; the sequence is LIKIILCFCSTCLGISIILYN. The Periplasmic portion of the chain corresponds to 30–128; sequence LEKNIIFFFP…KHDENYRPPS (99 aa). Heme-binding residues include His120 and Tyr124.

Belongs to the CcmE/CycJ family.

The protein localises to the cell inner membrane. Heme chaperone required for the biogenesis of c-type cytochromes. Transiently binds heme delivered by CcmC and transfers the heme to apo-cytochromes in a process facilitated by CcmF and CcmH. In Rickettsia typhi (strain ATCC VR-144 / Wilmington), this protein is Cytochrome c-type biogenesis protein CcmE.